A 524-amino-acid polypeptide reads, in one-letter code: Homeobox protein engrailed-like SMOX-2 (524 aa).

Residues Ser194 to Ser218 are disordered. The segment at residues Leu423–Ser482 is a DNA-binding region (homeobox).

This sequence belongs to the engrailed homeobox family.

It is found in the nucleus. This chain is Homeobox protein engrailed-like SMOX-2 (SMOX-2), found in Schistosoma mansoni (Blood fluke).